The sequence spans 270 residues: Urease accessory protein UreD (270 aa).

The protein belongs to the UreD family. In terms of assembly, ureD, UreF and UreG form a complex that acts as a GTP-hydrolysis-dependent molecular chaperone, activating the urease apoprotein by helping to assemble the nickel containing metallocenter of UreC. The UreE protein probably delivers the nickel.

The protein resides in the cytoplasm. Functionally, required for maturation of urease via the functional incorporation of the urease nickel metallocenter. This Actinobacillus pleuropneumoniae serotype 5b (strain L20) protein is Urease accessory protein UreD.